The chain runs to 432 residues: Enolase (432 aa).

A (2R)-2-phosphoglycerate-binding site is contributed by Gln163. The Proton donor role is filled by Glu205. Mg(2+)-binding residues include Asp242, Glu285, and Asp312. (2R)-2-phosphoglycerate is bound by residues Lys337, Arg366, Ser367, and Lys388. Lys337 serves as the catalytic Proton acceptor.

The protein belongs to the enolase family. It depends on Mg(2+) as a cofactor.

Its subcellular location is the cytoplasm. It localises to the secreted. The protein localises to the cell surface. It catalyses the reaction (2R)-2-phosphoglycerate = phosphoenolpyruvate + H2O. It participates in carbohydrate degradation; glycolysis; pyruvate from D-glyceraldehyde 3-phosphate: step 4/5. Functionally, catalyzes the reversible conversion of 2-phosphoglycerate (2-PG) into phosphoenolpyruvate (PEP). It is essential for the degradation of carbohydrates via glycolysis. The sequence is that of Enolase from Bifidobacterium adolescentis (strain ATCC 15703 / DSM 20083 / NCTC 11814 / E194a).